The sequence spans 380 residues: 1-deoxy-D-xylulose 5-phosphate reductoisomerase (380 aa).

NADPH is bound by residues Ser-10, Gly-11, Ser-12, Ile-13, Gly-36, Lys-37, Asn-38, and Asn-120. Lys-121 serves as a coordination point for 1-deoxy-D-xylulose 5-phosphate. Glu-122 lines the NADPH pocket. Asp-146 provides a ligand contact to Mn(2+). Positions 147, 148, 172, and 195 each coordinate 1-deoxy-D-xylulose 5-phosphate. Glu-148 contacts Mn(2+). Gly-201 is a binding site for NADPH. Positions 208, 213, 214, and 217 each coordinate 1-deoxy-D-xylulose 5-phosphate. Glu-217 contacts Mn(2+).

It belongs to the DXR family. Mg(2+) is required as a cofactor. The cofactor is Mn(2+).

It carries out the reaction 2-C-methyl-D-erythritol 4-phosphate + NADP(+) = 1-deoxy-D-xylulose 5-phosphate + NADPH + H(+). The protein operates within isoprenoid biosynthesis; isopentenyl diphosphate biosynthesis via DXP pathway; isopentenyl diphosphate from 1-deoxy-D-xylulose 5-phosphate: step 1/6. Its function is as follows. Catalyzes the NADPH-dependent rearrangement and reduction of 1-deoxy-D-xylulose-5-phosphate (DXP) to 2-C-methyl-D-erythritol 4-phosphate (MEP). This Bacillus cereus (strain ATCC 10987 / NRS 248) protein is 1-deoxy-D-xylulose 5-phosphate reductoisomerase.